Here is a 364-residue protein sequence, read N- to C-terminus: Histidinol-phosphate aminotransferase (364 aa).

Lys226 carries the post-translational modification N6-(pyridoxal phosphate)lysine.

This sequence belongs to the class-II pyridoxal-phosphate-dependent aminotransferase family. Histidinol-phosphate aminotransferase subfamily. As to quaternary structure, homodimer. The cofactor is pyridoxal 5'-phosphate.

It catalyses the reaction L-histidinol phosphate + 2-oxoglutarate = 3-(imidazol-4-yl)-2-oxopropyl phosphate + L-glutamate. It participates in amino-acid biosynthesis; L-histidine biosynthesis; L-histidine from 5-phospho-alpha-D-ribose 1-diphosphate: step 7/9. In Campylobacter jejuni subsp. jejuni serotype O:6 (strain 81116 / NCTC 11828), this protein is Histidinol-phosphate aminotransferase.